The following is a 408-amino-acid chain: Imidazolonepropionase (408 aa).

Positions 74 and 76 each coordinate Fe(3+). 2 residues coordinate Zn(2+): H74 and H76. The 4-imidazolone-5-propanoate site is built by R83, Y146, and H179. An N-formimidoyl-L-glutamate-binding site is contributed by Y146. Position 244 (H244) interacts with Fe(3+). Position 244 (H244) interacts with Zn(2+). Q247 serves as a coordination point for 4-imidazolone-5-propanoate. D319 serves as a coordination point for Fe(3+). D319 contacts Zn(2+). Residues N321 and G323 each coordinate N-formimidoyl-L-glutamate. T324 is a binding site for 4-imidazolone-5-propanoate.

The protein belongs to the metallo-dependent hydrolases superfamily. HutI family. Requires Zn(2+) as cofactor. Fe(3+) is required as a cofactor.

The protein localises to the cytoplasm. The enzyme catalyses 4-imidazolone-5-propanoate + H2O = N-formimidoyl-L-glutamate. It participates in amino-acid degradation; L-histidine degradation into L-glutamate; N-formimidoyl-L-glutamate from L-histidine: step 3/3. Its function is as follows. Catalyzes the hydrolytic cleavage of the carbon-nitrogen bond in imidazolone-5-propanoate to yield N-formimidoyl-L-glutamate. It is the third step in the universal histidine degradation pathway. The sequence is that of Imidazolonepropionase from Ralstonia nicotianae (strain ATCC BAA-1114 / GMI1000) (Ralstonia solanacearum).